Consider the following 284-residue polypeptide: Bifunctional protein FolD (284 aa).

Residues 166–168 and S191 each bind NADP(+); that span reads GRS.

Belongs to the tetrahydrofolate dehydrogenase/cyclohydrolase family. In terms of assembly, homodimer.

The enzyme catalyses (6R)-5,10-methylene-5,6,7,8-tetrahydrofolate + NADP(+) = (6R)-5,10-methenyltetrahydrofolate + NADPH. The catalysed reaction is (6R)-5,10-methenyltetrahydrofolate + H2O = (6R)-10-formyltetrahydrofolate + H(+). Its pathway is one-carbon metabolism; tetrahydrofolate interconversion. Its function is as follows. Catalyzes the oxidation of 5,10-methylenetetrahydrofolate to 5,10-methenyltetrahydrofolate and then the hydrolysis of 5,10-methenyltetrahydrofolate to 10-formyltetrahydrofolate. This chain is Bifunctional protein FolD, found in Leptospira borgpetersenii serovar Hardjo-bovis (strain JB197).